Here is a 504-residue protein sequence, read N- to C-terminus: Outer capsid protein VP5 (504 aa).

The segment at 1 to 42 (MGKFTSFLKRAGSATKNALTSDAAKRMYKMAGKTLQKVVESE) is involved in membrane permeabilization.

Belongs to the orbivirus VP5 family.

The protein resides in the virion. Its function is as follows. VP5 protein is one of the two proteins (with VP2) which constitute the virus particle outer capsid. Acts as a membrane permeabilization protein that mediates release of viral particles from endosomal compartments into the cytoplasm. Permeabilization activity is probably negatively regulated by VP2 and is triggered by endosomal degradation of VP2 and exposure to low pH. In African horse sickness virus 6 (AHSV-6), this protein is Outer capsid protein VP5 (Segment-6).